The following is a 347-amino-acid chain: Protein-glutamate methylesterase/protein-glutamine glutaminase 4 (347 aa).

A Response regulatory domain is found at 3-121 (KVLIVDDSAS…HPNHEREARS (119 aa)). D54 bears the 4-aspartylphosphate mark. The CheB-type methylesterase domain maps to 157–342 (PARLKAVAIG…PDRIVTALTS (186 aa)). Catalysis depends on residues S168, H195, and D289.

Belongs to the CheB family. In terms of processing, phosphorylated by CheA. Phosphorylation of the N-terminal regulatory domain activates the methylesterase activity.

Its subcellular location is the cytoplasm. It catalyses the reaction [protein]-L-glutamate 5-O-methyl ester + H2O = L-glutamyl-[protein] + methanol + H(+). The enzyme catalyses L-glutaminyl-[protein] + H2O = L-glutamyl-[protein] + NH4(+). Functionally, involved in chemotaxis. Part of a chemotaxis signal transduction system that modulates chemotaxis in response to various stimuli. Catalyzes the demethylation of specific methylglutamate residues introduced into the chemoreceptors (methyl-accepting chemotaxis proteins or MCP) by CheR. Also mediates the irreversible deamidation of specific glutamine residues to glutamic acid. The chain is Protein-glutamate methylesterase/protein-glutamine glutaminase 4 from Geobacter metallireducens (strain ATCC 53774 / DSM 7210 / GS-15).